Reading from the N-terminus, the 694-residue chain is Elongation factor G (694 aa).

The region spanning 8–287 (EDYRNFGIMA…AVVEFLPAPT (280 aa)) is the tr-type G domain. Residues 17-24 (AHIDAGKT), 86-90 (DTPGH), and 140-143 (NKMD) each bind GTP.

Belongs to the TRAFAC class translation factor GTPase superfamily. Classic translation factor GTPase family. EF-G/EF-2 subfamily.

The protein localises to the cytoplasm. Functionally, catalyzes the GTP-dependent ribosomal translocation step during translation elongation. During this step, the ribosome changes from the pre-translocational (PRE) to the post-translocational (POST) state as the newly formed A-site-bound peptidyl-tRNA and P-site-bound deacylated tRNA move to the P and E sites, respectively. Catalyzes the coordinated movement of the two tRNA molecules, the mRNA and conformational changes in the ribosome. The chain is Elongation factor G from Brucella ovis (strain ATCC 25840 / 63/290 / NCTC 10512).